The sequence spans 259 residues: MNLLQKTRKINAMLQKAAGKPVNFKEMAETLCEVIEANVFVVSRRGKLLGFAIKQSIENERMKRMLEERQFPEEYTKKLFNITETSPNIDINSEYTAFPVENRDLFKTGLTTIVPINGGGERLGTLILSRLDREFNDDDLILAEYGATVVGMEILREKAEEIEEEARSKAVVQMAISSLSYSELEAIEHIFEELEGTEGLLVASKIADRVGITRSVIVNALRKLESAGVIESRSLGMKGTYIKVLNDKFLTELEKLKSS.

The GAF domain stretch occupies residues 1 to 155 (MNLLQKTRKI…GATVVGMEIL (155 aa)). Positions 203-222 (ASKIADRVGITRSVIVNALR) form a DNA-binding region, H-T-H motif. S215 is subject to Phosphoserine.

This sequence belongs to the CodY family.

It localises to the cytoplasm. In terms of biological role, DNA-binding global transcriptional regulator which is involved in the adaptive response to starvation and acts by directly or indirectly controlling the expression of numerous genes in response to nutrient availability. During rapid exponential growth, CodY is highly active and represses genes whose products allow adaptation to nutrient depletion. The sequence is that of Global transcriptional regulator CodY from Geobacillus sp. (strain WCH70).